Reading from the N-terminus, the 161-residue chain is Thy-1 membrane glycoprotein (161 aa).

Positions 1-19 (MNPVISITLLLSVLQMSRG) are cleaved as a signal peptide. Glutamine 20 is modified (pyrrolidone carboxylic acid). Positions 20–126 (QRVISLTACL…NKTINVIRDK (107 aa)) constitute an Ig-like V-type domain. Disulfide bonds link cysteine 28–cysteine 130 and cysteine 38–cysteine 104. An N-linked (GlcNAc...) (complex) asparagine; alternate glycan is attached at asparagine 42. An N-linked (GlcNAc...) (high mannose) asparagine; alternate glycan is attached at asparagine 42. Asparagine 42 carries an N-linked (GlcNAc...) asparagine; alternate glycan. Serine 82 bears the Phosphoserine mark. Asparagine 93 is a glycosylation site (N-linked (GlcNAc...) (complex) asparagine; alternate). Asparagine 93 is a glycosylation site (N-linked (GlcNAc...) asparagine; alternate). An N-linked (GlcNAc...) (high mannose) asparagine; in brain; alternate glycan is attached at asparagine 117. An N-linked (GlcNAc...) (hybrid) asparagine; in brain; alternate glycan is attached at asparagine 117. Cysteine 130 carries the GPI-anchor amidated cysteine lipid modification. Residues 131 to 161 (GGISLLVQNTSWLLLLLLSLSFLQATDFISL) constitute a propeptide, removed in mature form.

Post-translationally, glycosylation is tissue specific. Sialylation of N-glycans at Asn-93 in brain and at Asn-42, Asn-93 and Asn-117 in thymus. As to expression, abundant in lymphoid tissues.

Its subcellular location is the cell membrane. May play a role in cell-cell or cell-ligand interactions during synaptogenesis and other events in the brain. This is Thy-1 membrane glycoprotein (Thy1) from Rattus norvegicus (Rat).